Reading from the N-terminus, the 260-residue chain is Adenosylcobinamide-GDP ribazoletransferase (260 aa).

Helical transmembrane passes span 31 to 51 (IIFFPFIGFLEGVFCIFLVNI), 55 to 75 (IFSSSVISIILLVFLFSVRGI), 111 to 131 (VIGVAGAVALVLDVLCRFAFV), 140 to 160 (FLIFLFMFCFSRWIVIPLMYY), 177 to 197 (ISSWQVIISTVLPIFLLVYFT), 202 to 222 (FIFLPLIALFLFFISYILKKF), and 234 to 254 (HLGATVEITEIVFLICFLLGE).

Belongs to the CobS family. Mg(2+) serves as cofactor.

Its subcellular location is the cell inner membrane. It carries out the reaction alpha-ribazole + adenosylcob(III)inamide-GDP = adenosylcob(III)alamin + GMP + H(+). The catalysed reaction is alpha-ribazole 5'-phosphate + adenosylcob(III)inamide-GDP = adenosylcob(III)alamin 5'-phosphate + GMP + H(+). It functions in the pathway cofactor biosynthesis; adenosylcobalamin biosynthesis; adenosylcobalamin from cob(II)yrinate a,c-diamide: step 7/7. Functionally, joins adenosylcobinamide-GDP and alpha-ribazole to generate adenosylcobalamin (Ado-cobalamin). Also synthesizes adenosylcobalamin 5'-phosphate from adenosylcobinamide-GDP and alpha-ribazole 5'-phosphate. This Thermodesulfovibrio yellowstonii (strain ATCC 51303 / DSM 11347 / YP87) protein is Adenosylcobinamide-GDP ribazoletransferase.